Reading from the N-terminus, the 1196-residue chain is uncharacterized protein (1196 aa).

Residues 27 to 47 (ILLLLGSFILLNVWINVVTLL) traverse the membrane as a helical segment. 7 disordered regions span residues 150 to 345 (GGGE…PQAH), 367 to 402 (SSVP…ASAP), 669 to 762 (TQDS…QKNT), 775 to 806 (CLTQ…DSGI), 826 to 877 (QATD…QDSE), 960 to 1009 (YRSS…GPYK), and 1168 to 1196 (KCEA…DIRM). Residues 157–177 (VTASKAQASLLSRPETSSQFP) show a composition bias toward polar residues. 2 stretches are compositionally biased toward low complexity: residues 212–227 (HSPT…HPWT) and 253–279 (THSQ…TPAH). The segment covering 299 to 321 (HTSAQAQTHSPPHTPEYTHSQAH) has biased composition (polar residues). A compositionally biased stretch (pro residues) spans 391–402 (APTPAPVPASAP). Composition is skewed to polar residues over residues 733 to 742 (YLCQNPSPSQ), 750 to 762 (SGIT…QKNT), 787 to 804 (PFTQ…TQDS), and 826 to 849 (QATD…TGNV). A compositionally biased stretch (basic and acidic residues) spans 962 to 971 (SSEHSQDSNL).

Its subcellular location is the membrane. This is an uncharacterized protein from Homo sapiens (Human).